A 1232-amino-acid chain; its full sequence is uncharacterized protein (1232 aa).

It belongs to the Mg-chelatase subunit H family.

This is an uncharacterized protein from Methanocaldococcus jannaschii (strain ATCC 43067 / DSM 2661 / JAL-1 / JCM 10045 / NBRC 100440) (Methanococcus jannaschii).